A 346-amino-acid chain; its full sequence is Protein Spea_1705 (346 aa).

Cys101 functions as the Proton acceptor in the catalytic mechanism. Residues 102-103 (GH), Asp262, and 267-268 (GT) contribute to the substrate site.

This sequence belongs to the proline racemase family.

The catalysed reaction is trans-3-hydroxy-L-proline = 1-pyrroline-2-carboxylate + H2O. In vitro, catalyzes the dehydration of trans-3-hydroxy-L-proline (t3LHyp) to Delta(1)-pyrroline-2-carboxylate (Pyr2C), albeit with very low efficiency. The physiological substrate may be different. Displays neither trans-4-hydroxy-L-proline (t4LHyp) epimerase nor proline racemase activity. The chain is Protein Spea_1705 from Shewanella pealeana (strain ATCC 700345 / ANG-SQ1).